The chain runs to 653 residues: ATP-dependent zinc metalloprotease FtsH 1 (653 aa).

Residues 1–8 (MAENKWLR) lie on the Cytoplasmic side of the membrane. A helical transmembrane segment spans residues 9–29 (NGFVWIVLIIAVVALWVTFMK). Over 30-110 (DGGSAREENF…RVNPASQWGN (81 aa)) the chain is Extracellular. A helical membrane pass occupies residues 111 to 131 (WLSALTFILPTLFLIGIVIFM). Topologically, residues 132 to 653 (MRQAQGTNNQ…SPTMRPQPAS (522 aa)) are cytoplasmic. 203 to 210 (GPPGTGKT) provides a ligand contact to ATP. His-425 lines the Zn(2+) pocket. Residue Glu-426 is part of the active site. Zn(2+)-binding residues include His-429 and Asp-501. Residues 604 to 653 (EPRPRPQLVGPPVTRPAALAHKTEEADRGGERSPHPQPHPSPTMRPQPAS) form a disordered region. Residues 624–637 (HKTEEADRGGERSP) show a composition bias toward basic and acidic residues. Residues 638 to 653 (HPQPHPSPTMRPQPAS) show a composition bias toward pro residues.

It in the central section; belongs to the AAA ATPase family. This sequence in the C-terminal section; belongs to the peptidase M41 family. Homohexamer. Zn(2+) is required as a cofactor.

It localises to the cell membrane. Acts as a processive, ATP-dependent zinc metallopeptidase for both cytoplasmic and membrane proteins. Plays a role in the quality control of integral membrane proteins. The protein is ATP-dependent zinc metalloprotease FtsH 1 of Sphaerobacter thermophilus (strain ATCC 49802 / DSM 20745 / KCCM 41009 / NCIMB 13125 / S 6022).